We begin with the raw amino-acid sequence, 466 residues long: Endoglucanase E-5 (466 aa).

An N-terminal signal peptide occupies residues 1 to 36 (MAKSPAARKGXPPVAVAVTAALALLIALLSPGVAQA). One can recognise a CBM2 domain in the interval 37-139 (AGLTATVTKE…TINGAPCDEG (103 aa)). The tract at residues 129-166 (CTINGAPCDEGSEPGGPGGPGTPSPDPGTQPGTGTPVE) is disordered. Glu299 functions as the Proton donor in the catalytic mechanism. The active-site Nucleophile is Glu391.

This sequence belongs to the glycosyl hydrolase 5 (cellulase A) family.

The catalysed reaction is Endohydrolysis of (1-&gt;4)-beta-D-glucosidic linkages in cellulose, lichenin and cereal beta-D-glucans.. It functions in the pathway glycan metabolism; cellulose degradation. The protein is Endoglucanase E-5 (celE) of Thermobifida fusca (Thermomonospora fusca).